Consider the following 250-residue polypeptide: Small ribosomal subunit protein uS3 (250 aa).

Residues 39–107 (VRAALKKRLY…EVHLNIVEIR (69 aa)) form the KH type-2 domain. A disordered region spans residues 215–250 (LDKRLATESGPAGEGGGRERGDRPDRGDRRDRRDRA). The segment covering 230-250 (GGRERGDRPDRGDRRDRRDRA) has biased composition (basic and acidic residues).

It belongs to the universal ribosomal protein uS3 family. Part of the 30S ribosomal subunit. Forms a tight complex with proteins S10 and S14.

Functionally, binds the lower part of the 30S subunit head. Binds mRNA in the 70S ribosome, positioning it for translation. This chain is Small ribosomal subunit protein uS3, found in Caulobacter vibrioides (strain ATCC 19089 / CIP 103742 / CB 15) (Caulobacter crescentus).